We begin with the raw amino-acid sequence, 131 residues long: Small ribosomal subunit protein uS8 (131 aa).

The protein belongs to the universal ribosomal protein uS8 family. In terms of assembly, part of the 30S ribosomal subunit. Contacts proteins S5 and S12.

In terms of biological role, one of the primary rRNA binding proteins, it binds directly to 16S rRNA central domain where it helps coordinate assembly of the platform of the 30S subunit. The protein is Small ribosomal subunit protein uS8 of Wolinella succinogenes (strain ATCC 29543 / DSM 1740 / CCUG 13145 / JCM 31913 / LMG 7466 / NCTC 11488 / FDC 602W) (Vibrio succinogenes).